The primary structure comprises 858 residues: Rho GTPase-activating protein 17 (858 aa).

The region spanning 14-246 (QTVGRAEKTE…MRAHQDKWAE (233 aa)) is the BAR domain. The region spanning 252-442 (TPLEEHLKRS…PIIQHADWFF (191 aa)) is the Rho-GAP domain. Residues 459-475 (TPNSNHSSHTGNDSDSG) show a composition bias toward polar residues. A disordered region spans residues 459 to 482 (TPNSNHSSHTGNDSDSGTLERKRP). Serine 484 carries the post-translational modification Phosphoserine. Residues 516–823 (RKHISPAFQP…VTDTNSRVSE (308 aa)) form a disordered region. Positions 543–552 (PSQSSRADSN) are enriched in polar residues. The span at 553–563 (SVGGPVPSSSG) shows a compositional bias: low complexity. Serine 575 is subject to Phosphoserine. A compositionally biased stretch (polar residues) spans 592 to 617 (RNSNQITTVPNQAQTGGNSHQLSVGT). Residues 637-650 (APAPPKPGNPPPGH) show a composition bias toward pro residues. Residues 653-702 (GQSSPGTGTSPKPSTRSPSPPQQQQQQQQQQQQQQQQQQQQQQQQQQQQQ) show a composition bias toward low complexity. 2 positions are modified to phosphoserine: serine 710 and serine 712. 2 stretches are compositionally biased toward pro residues: residues 716–729 (IQAP…PPTQ) and 738–756 (EPGP…PPPA). Phosphothreonine is present on residues threonine 742, threonine 746, and threonine 748. The SH3-binding signature appears at 742–755 (TPPQTPTPPSTPPP). Serine 751 is modified (phosphoserine). Threonine 752 is subject to Phosphothreonine. A compositionally biased stretch (polar residues) spans 757 to 769 (KQNSSQSETTQLH). Pro residues predominate over residues 784-794 (RPSVPPPPNPP). Polar residues predominate over residues 806–823 (SVPTASRIVTDTNSRVSE).

In terms of assembly, component of a complex whose core is composed of ARHGAP17, AMOT, PALS1, PATJ and PARD3/PAR3. Interacts with NHERF1, FNBP1, TRIP10, CAPZA (CAPZA1, CAPZA2 or CAPZA3), CAPZB, CD2AP and SH3KBP1/CIN85. As to expression, highly expressed in brain; neuron-specific (at protein level). Isoform 2, isoform 3 and isoform 4 are predominantly expressed in neuronal tissues and correlate well with the differentiation of neurons, while isoform 1 is strongly expressed in embryonic brain.

The protein localises to the membrane. Its subcellular location is the cytoplasm. It is found in the cell junction. The protein resides in the tight junction. Its function is as follows. Rho GTPase-activating protein involved in the maintenance of tight junction by regulating the activity of CDC42, thereby playing a central role in apical polarity of epithelial cells. Specifically acts as a GTPase activator for the CDC42 GTPase by converting it to an inactive GDP-bound state. The complex formed with AMOT acts by regulating the uptake of polarity proteins at tight junctions, possibly by deciding whether tight junction transmembrane proteins are recycled back to the plasma membrane or sent elsewhere. Participates in the Ca(2+)-dependent regulation of exocytosis, possibly by catalyzing GTPase activity of Rho family proteins and by inducing the reorganization of the cortical actin filaments. Acts as a GTPase activator in vitro for RAC1. This chain is Rho GTPase-activating protein 17 (Arhgap17), found in Rattus norvegicus (Rat).